We begin with the raw amino-acid sequence, 456 residues long: 3-isopropylmalate dehydratase large subunit (456 aa).

3 residues coordinate [4Fe-4S] cluster: C336, C396, and C399.

Belongs to the aconitase/IPM isomerase family. LeuC type 1 subfamily. Heterodimer of LeuC and LeuD. The cofactor is [4Fe-4S] cluster.

It carries out the reaction (2R,3S)-3-isopropylmalate = (2S)-2-isopropylmalate. It functions in the pathway amino-acid biosynthesis; L-leucine biosynthesis; L-leucine from 3-methyl-2-oxobutanoate: step 2/4. Functionally, catalyzes the isomerization between 2-isopropylmalate and 3-isopropylmalate, via the formation of 2-isopropylmaleate. The protein is 3-isopropylmalate dehydratase large subunit of Staphylococcus haemolyticus (strain JCSC1435).